Consider the following 809-residue polypeptide: AP-3 complex subunit beta (809 aa).

HEAT repeat units lie at residues 37-76 (YYSQNINPQQLVTLLNSRNSREVRDAMKRIISIMASDDDS), 112-151 (DPNLTLLSINSLQKSLSDSNSELRCFALSALSDMKMSSLA), 153-186 (IILHTVKKLVTDPSAMVRGEVALAIIKLYRAGKN), 187-224 (DYHEELLDILKELMADTDPKVISCAVLAYKECYADHLE), and 524-561 (KICPDVLRRLIQNFSNEGPETRCQILVLSAKLLSYDID). 4 positions are modified to phosphoserine: Ser-693, Ser-698, Ser-724, and Ser-726. Disordered stretches follow at residues 708-739 (FTSSSNAKLTGINDGDSNSISGKGNVNTFTSQ) and 763-809 (PRKI…HLEL). Over residues 722–739 (GDSNSISGKGNVNTFTSQ) the composition is skewed to polar residues. The segment covering 772-791 (ESSDEDEDESEESSDDDEYS) has biased composition (acidic residues). The segment covering 792 to 809 (DSSLGTSSSGTSSSHLEL) has biased composition (low complexity).

It belongs to the adaptor complexes large subunit family. Adaptor protein complex 3 (AP-3) is a heterotetramer composed of 2 large adaptins (APL5 and APL6), a medium adaptin (APM3) and a small adaptin (APS3). In terms of processing, pyrophosphorylated by 5-diphosphoinositol pentakisphosphate (5-IP7). Serine pyrophosphorylation is achieved by Mg(2+)-dependent, but enzyme independent transfer of a beta-phosphate from a inositol pyrophosphate to a pre-phosphorylated serine residue.

Its subcellular location is the golgi apparatus. It is found in the cytoplasmic vesicle. It localises to the clathrin-coated vesicle membrane. In terms of biological role, part of the AP-3 complex, an adaptor-related complex which is not clathrin-associated. The complex is associated with the Golgi region as well as more peripheral structures. It facilitates the budding of vesicles from the Golgi membrane and may be directly involved in trafficking to the vacuole. Required for the transport via the ALP pathway, which directs the transport of the cargo proteins PHO8 and VAM3 to the vacuole. This chain is AP-3 complex subunit beta (APL6), found in Saccharomyces cerevisiae (strain ATCC 204508 / S288c) (Baker's yeast).